Here is a 320-residue protein sequence, read N- to C-terminus: Cytochrome f (320 aa).

An N-terminal signal peptide occupies residues 1–35 (MEKRNTYDWVTRWVIASFSILTISYMITWTSISNA). Heme-binding residues include Tyr36, Cys56, Cys59, and His60. Residues 286 to 306 (IQGLLVFLASVVLAQIFLVLK) form a helical membrane-spanning segment.

It belongs to the cytochrome f family. As to quaternary structure, the 4 large subunits of the cytochrome b6-f complex are cytochrome b6, subunit IV (17 kDa polypeptide, petD), cytochrome f and the Rieske protein, while the 4 small subunits are PetG, PetL, PetM and PetN. The complex functions as a dimer. Heme serves as cofactor.

The protein resides in the plastid. The protein localises to the chloroplast thylakoid membrane. Functionally, component of the cytochrome b6-f complex, which mediates electron transfer between photosystem II (PSII) and photosystem I (PSI), cyclic electron flow around PSI, and state transitions. The polypeptide is Cytochrome f (Welwitschia mirabilis (Tree tumbo)).